We begin with the raw amino-acid sequence, 865 residues long: MYLYIETLKQRLDAINQLRLERAFASMSDVFKQVYGLIPVLLHYHHPQLPGYIQGNVPHGTCFFEPDDVQRQWVNKLTNASCDEPMNGYTSGELPITGIYSMGSTSSIGQSHCSDIDIWVCHQSWLDQDERARLQRKCLLIEQWAGELGIDVTFFLIDENRFRHHASGSLGGEDCGSTQHILLLDEFYRTAVRLAGKRLLWTMVPVEEEYHYDEYVNSLYAQGVLTPNEWLDLGGLGELSAEEYFGASLWQLYKSVDSPYKAVLKSILLEAYSADYPNGKLLALEMKQHLHRGEIVNYGLDAYCMMLERVTRYLVSINDLTRLDLIRRCFYLKVCEKLSNEKNENEPAGWRRQVLSQLVTQWQWDHERLAILDNRDSWKIERVRNAHNELLDTMMQSYRNLIRFARRNNLSVSASPQDIGVLTRKLYAAFEALPGKVTLVNPQISPDLSEPHLTFIYVPPGRANRSGWYLYNRAPDFAHIVGHQPLEYNRYLNKLVAWSYFNGLLTKDSQVYIHQGDSSCDEIKLHELVRDISSHFPIRLPAPTPKALYSPCEIRHLAIIVNLEVDPTERFSDQVVHFDFRKLDVFSFGEEEQCLIGSIDLLYRNSWNEVRTLHFNGTQSMLESLKTILGKMHQDAAPPASVEVFCYSQHLRGLIRTRVQQLVSECIELRLSTNRLEPGRFKALRIAGQTWGLFFERLNVSVQKLENAIEFYGAISYNKLHGLPVKLGKDARYLPAVIDGFACEGIIQFFFETTEDNNVFNIYILDEANRVEIYSHCEGSKEELVKDVSRFYSSSHDRFTYGSSFINFNLPQFYQIVKVDGATQVLPFAGGSFGKLSDLGKTAPKEEMSTKPIQGFNDYQAVHHH.

The catalytic stretch occupies residues 1–540 (MYLYIETLKQ…DISSHFPIRL (540 aa)). The segment at 546-865 (KALYSPCEIR…FNDYQAVHHH (320 aa)) is regulatory.

The protein belongs to the adenylyl cyclase class-1 family.

The protein resides in the cytoplasm. The catalysed reaction is ATP = 3',5'-cyclic AMP + diphosphate. The chain is Adenylate cyclase (cya) from Proteus mirabilis.